Consider the following 695-residue polypeptide: ATP-dependent DNA helicase II subunit 2 (695 aa).

Residues 229–461 form the Ku domain; it reads FSIGNRDSKD…IDFAVSNYID (233 aa).

Belongs to the ku80 family. In terms of assembly, heterodimer of pku70 and pku80.

Its subcellular location is the nucleus. It is found in the chromosome. It localises to the telomere. The catalysed reaction is ATP + H2O = ADP + phosphate + H(+). Its function is as follows. Single-stranded DNA-dependent ATP-dependent helicase. Involved in non-homologous end joining (NHEJ) DNA double strand break repair. DNA-binding is sequence-independent but has a high affinity to nicks in double-stranded DNA and to the ends of duplex DNA. Binds to naturally occurring chromosomal ends, and therefore provides chromosomal end protection. Required also for telomere recombination to repair telomeric ends in the absence of telomerase. ku70, of the ku70/ku80 heterodimer, binds to the stem loop of tlc1, the RNA component of telomerase. Involved in telomere maintenance. Interacts with telomeric repeats and subtelomeric sequences thereby controlling telomere length and protecting against subtelomeric rearrangement. Required for mating-type switching. This is ATP-dependent DNA helicase II subunit 2 (pku80) from Schizosaccharomyces pombe (strain 972 / ATCC 24843) (Fission yeast).